The sequence spans 89 residues: Small ribosomal subunit protein uS15 (89 aa).

The protein belongs to the universal ribosomal protein uS15 family. As to quaternary structure, part of the 30S ribosomal subunit. Forms a bridge to the 50S subunit in the 70S ribosome, contacting the 23S rRNA.

One of the primary rRNA binding proteins, it binds directly to 16S rRNA where it helps nucleate assembly of the platform of the 30S subunit by binding and bridging several RNA helices of the 16S rRNA. In terms of biological role, forms an intersubunit bridge (bridge B4) with the 23S rRNA of the 50S subunit in the ribosome. This is Small ribosomal subunit protein uS15 from Corynebacterium kroppenstedtii (strain DSM 44385 / JCM 11950 / CIP 105744 / CCUG 35717).